Consider the following 321-residue polypeptide: Glucokinase (321 aa).

Position 8–13 (8–13 (GDVGGT)) interacts with ATP.

It belongs to the bacterial glucokinase family.

The protein resides in the cytoplasm. It catalyses the reaction D-glucose + ATP = D-glucose 6-phosphate + ADP + H(+). This is Glucokinase from Erwinia tasmaniensis (strain DSM 17950 / CFBP 7177 / CIP 109463 / NCPPB 4357 / Et1/99).